We begin with the raw amino-acid sequence, 425 residues long: Histidine--tRNA ligase (425 aa).

Belongs to the class-II aminoacyl-tRNA synthetase family. In terms of assembly, homodimer.

Its subcellular location is the cytoplasm. It catalyses the reaction tRNA(His) + L-histidine + ATP = L-histidyl-tRNA(His) + AMP + diphosphate + H(+). The sequence is that of Histidine--tRNA ligase from Listeria monocytogenes serotype 4b (strain F2365).